The primary structure comprises 248 residues: ATP synthase subunit a, chloroplastic (248 aa).

5 helical membrane-spanning segments follow: residues 35–55, 94–114, 133–153, 202–222, and 224–244; these read GQVF…SFLG, VPYI…GALI, INTT…AGLS, VFTL…GLFA, and SIQA…AMEG.

This sequence belongs to the ATPase A chain family. In terms of assembly, F-type ATPases have 2 components, CF(1) - the catalytic core - and CF(0) - the membrane proton channel. CF(1) has five subunits: alpha(3), beta(3), gamma(1), delta(1), epsilon(1). CF(0) has four main subunits: a, b, b' and c.

It is found in the plastid. The protein localises to the chloroplast thylakoid membrane. Functionally, key component of the proton channel; it plays a direct role in the translocation of protons across the membrane. The sequence is that of ATP synthase subunit a, chloroplastic from Pyropia yezoensis (Susabi-nori).